Here is a 269-residue protein sequence, read N- to C-terminus: MTLKIGIVGAGGRMGRNLITAVQNAEGVELGAAFERKGSSLVGADAGEVAGIGATGVKISDDLNQNTNFDVLIDFTRPEGTLEHIKFCVANGKKMVIGTTGFDDAGKQAIQTAAEQISIVFASNYSVGVNLVFKLLEKAAKVMGDYCDIEVIEAHHRHKVDAPSGTALSMGEHIAKTLGRDLKTHGVFAREGITGERKRDEIGFATIRAGDVVGEHSVWFADEGERVEIAHKASSRMTFANGAVRAAKWLNTKQNGLFDMTDVLDLNNL.

NAD(+) contacts are provided by residues 9–14 and Glu35; that span reads GAGGRM. Residue Arg36 participates in NADP(+) binding. NAD(+) is bound by residues 98-100 and 122-125; these read GTT and ASNY. Residue His155 is the Proton donor/acceptor of the active site. His156 is a (S)-2,3,4,5-tetrahydrodipicolinate binding site. The active-site Proton donor is the Lys159. 165–166 serves as a coordination point for (S)-2,3,4,5-tetrahydrodipicolinate; that stretch reads GT.

This sequence belongs to the DapB family.

The protein resides in the cytoplasm. It carries out the reaction (S)-2,3,4,5-tetrahydrodipicolinate + NAD(+) + H2O = (2S,4S)-4-hydroxy-2,3,4,5-tetrahydrodipicolinate + NADH + H(+). It catalyses the reaction (S)-2,3,4,5-tetrahydrodipicolinate + NADP(+) + H2O = (2S,4S)-4-hydroxy-2,3,4,5-tetrahydrodipicolinate + NADPH + H(+). The protein operates within amino-acid biosynthesis; L-lysine biosynthesis via DAP pathway; (S)-tetrahydrodipicolinate from L-aspartate: step 4/4. Functionally, catalyzes the conversion of 4-hydroxy-tetrahydrodipicolinate (HTPA) to tetrahydrodipicolinate. The chain is 4-hydroxy-tetrahydrodipicolinate reductase from Actinobacillus pleuropneumoniae serotype 7 (strain AP76).